Reading from the N-terminus, the 317-residue chain is Universal stress protein Mb2019 (317 aa).

Residues glycine 13, 128-134 (GYRGQGA), 142-143 (SV), glycine 175, aspartate 208, 277-283 (GSHGRGG), and 291-293 (SVS) contribute to the ATP site.

It belongs to the universal stress protein A family.

The sequence is that of Universal stress protein Mb2019 from Mycobacterium bovis (strain ATCC BAA-935 / AF2122/97).